Reading from the N-terminus, the 587-residue chain is Cyclic GMP-AMP synthase-like receptor (587 aa).

2 disordered regions span residues 26–48 (IHPS…RRDD) and 77–229 (TRMH…DRPL). Composition is skewed to basic and acidic residues over residues 95 to 138 (TRDR…RDSL), 150 to 185 (DGAR…RESL), and 204 to 228 (PESR…HDRP). Residues Glu-307, Asp-309, and Asp-409 each contribute to the Mg(2+) site.

Belongs to the mab-21 family. Mg(2+) serves as cofactor. The cofactor is Mn(2+).

The enzyme catalyses UTP + ATP = 2',3'-cUAMP + 2 diphosphate. Nucleotidyltransferase that catalyzes the formation of cyclic UMP-AMP (2',3'-cUAMP) from ATP and UTP and plays a key role in innate immunity. Acts as a key sensor of double-stranded DNA (dsDNA), the presence of dsDNA in the cytoplasm being a danger signal that triggers the immune responses. Directly binds dsDNA, activating the nucleotidyltransferase activity, leading to synthesis of 2',3'-cUAMP, a second messenger that binds to and activates Sting, thereby triggering the immune response via activation of the NF-kappa-B transcription factor. In Magallana gigas (Pacific oyster), this protein is Cyclic GMP-AMP synthase-like receptor.